We begin with the raw amino-acid sequence, 753 residues long: 5-methyltetrahydropteroyltriglutamate--homocysteine methyltransferase (753 aa).

5-methyltetrahydropteroyltri-L-glutamate is bound by residues 17–20 (RELK) and Lys117. Residues 431-433 (IGS) and Glu484 contribute to the L-homocysteine site. Residues 431–433 (IGS) and Glu484 contribute to the L-methionine site. 5-methyltetrahydropteroyltri-L-glutamate-binding positions include 515–516 (RC) and Trp561. Asp599 contributes to the L-homocysteine binding site. Asp599 is a binding site for L-methionine. Glu605 is a binding site for 5-methyltetrahydropteroyltri-L-glutamate. His641, Cys643, and Glu665 together coordinate Zn(2+). His694 acts as the Proton donor in catalysis. Cys726 is a Zn(2+) binding site.

The protein belongs to the vitamin-B12 independent methionine synthase family. It depends on Zn(2+) as a cofactor.

It carries out the reaction 5-methyltetrahydropteroyltri-L-glutamate + L-homocysteine = tetrahydropteroyltri-L-glutamate + L-methionine. It participates in amino-acid biosynthesis; L-methionine biosynthesis via de novo pathway; L-methionine from L-homocysteine (MetE route): step 1/1. Catalyzes the transfer of a methyl group from 5-methyltetrahydrofolate to homocysteine resulting in methionine formation. The sequence is that of 5-methyltetrahydropteroyltriglutamate--homocysteine methyltransferase from Shigella boydii serotype 4 (strain Sb227).